We begin with the raw amino-acid sequence, 1048 residues long: 3-hydroxy-3-methylglutaryl-coenzyme A reductase (1048 aa).

The Cytoplasmic portion of the chain corresponds to 1–32; that stretch reads MDPVVKKPSPGGVQHRVTKGLRAIVGHACRHP. A helical transmembrane segment spans residues 33-53; it reads IHTLLVTALTAATTHLHVLEG. Residues 54–220 lie on the Lumenal side of the membrane; the sequence is TYQAAHRGLA…FLHRVKHAET (167 aa). A helical membrane pass occupies residues 221–241; sequence VDLVIIGLSYLAMNMTVVSLF. One can recognise an SSD domain in the interval 222–403; the sequence is DLVIIGLSYL…FTFYATILCV (182 aa). The Cytoplasmic portion of the chain corresponds to 242 to 250; sequence RVMRQLGSR. The helical transmembrane segment at 251-271 threads the bilayer; the sequence is FWLATSVLLSGAFAFVLGLGI. The Lumenal segment spans residues 272 to 276; that stretch reads TTTCD. Residues 277 to 297 traverse the membrane as a helical segment; the sequence is VPVDMLLLFEGIPYLVLTVGF. Topologically, residues 298–348 are cytoplasmic; that stretch reads EKPIQLTRAVLCVSEELRGGWQRPVPNGASSDDSRQSQLIPNIIQLAVDRE. Residues 349-369 form a helical membrane-spanning segment; sequence GWYIVRSYLLEIGALALGAVL. The Lumenal portion of the chain corresponds to 370 to 377; that stretch reads RPNDSLGH. An N-linked (GlcNAc...) asparagine glycan is attached at Asn-372. A helical membrane pass occupies residues 378 to 398; that stretch reads FCFLAAWTLLIDAILLFTFYA. At 399–439 the chain is on the cytoplasmic side; the sequence is TILCVKLEITRIRSPGGLGQVNAKHPSGIFGHKVKSTNITW. The helical transmembrane segment at 440–460 threads the bilayer; sequence WKLLTVGGFVLCHFLQLSPFF. Residues 461-542 lie on the Lumenal side of the membrane; that stretch reads YRVMGEYMAN…LDGLESPLGR (82 aa). Asn-470 and Asn-520 each carry an N-linked (GlcNAc...) asparagine glycan. The chain crosses the membrane as a helical span at residues 543-563; the sequence is LCLMGALVVSLVLNNHLIHAA. Residues 564 to 1048 are Cytoplasmic-facing; sequence RWHAWPQARE…NRSAGATVKK (485 aa). Glu-729 acts as the Charge relay system in catalysis. Position 735–741 (735–741) interacts with CoA; that stretch reads SASRGCK. NADP(+)-binding positions include 796 to 798 and 823 to 831; these read SRF and DAMGMNMIS. The active-site Charge relay system is Lys-863. A CoA-binding site is contributed by 892-894; the sequence is VLK. Asp-939 functions as the Charge relay system in the catalytic mechanism. Residue 1034-1035 participates in CoA binding; the sequence is AH. The active-site Proton donor is the His-1035. NADP(+) is bound at residue 1039–1040; sequence NR.

This sequence belongs to the HMG-CoA reductase family.

The protein localises to the endoplasmic reticulum membrane. It carries out the reaction (R)-mevalonate + 2 NADP(+) + CoA = (3S)-3-hydroxy-3-methylglutaryl-CoA + 2 NADPH + 2 H(+). It participates in metabolic intermediate biosynthesis; (R)-mevalonate biosynthesis; (R)-mevalonate from acetyl-CoA: step 3/3. Functionally, HMG-CoA reductase; part of the first module of ergosterol biosynthesis pathway that includes the early steps of the pathway, conserved across all eukaryotes, and which results in the formation of mevalonate from acetyl-coenzyme A (acetyl-CoA). In this module, the cytosolic acetyl-CoA acetyltransferase catalyzes the formation of acetoacetyl-CoA. The hydroxymethylglutaryl-CoA synthase then condenses acetyl-CoA with acetoacetyl-CoA to form HMG-CoA. The rate-limiting step of the early module is the reduction to mevalonate by the 3-hydroxy-3-methylglutaryl-coenzyme A (HMG-CoA) reductase. The protein is 3-hydroxy-3-methylglutaryl-coenzyme A reductase of Aspergillus terreus (strain NIH 2624 / FGSC A1156).